Reading from the N-terminus, the 400-residue chain is Enoyl-[acyl-carrier-protein] reductase [NADH] (400 aa).

Residues 48–53 (GSSSGY), 74–75 (FE), 111–112 (DA), and 139–140 (LA) contribute to the NAD(+) site. Tyr-225 is a substrate binding site. The active-site Proton donor is Tyr-235. NAD(+) is bound by residues Lys-244 and 273–275 (VVT).

It belongs to the TER reductase family. Monomer.

The catalysed reaction is a 2,3-saturated acyl-[ACP] + NAD(+) = a (2E)-enoyl-[ACP] + NADH + H(+). The protein operates within lipid metabolism; fatty acid biosynthesis. Functionally, involved in the final reduction of the elongation cycle of fatty acid synthesis (FAS II). Catalyzes the reduction of a carbon-carbon double bond in an enoyl moiety that is covalently linked to an acyl carrier protein (ACP). The protein is Enoyl-[acyl-carrier-protein] reductase [NADH] of Shewanella baltica (strain OS185).